The primary structure comprises 232 residues: Proteasome subunit alpha (232 aa).

The protein belongs to the peptidase T1A family. The 20S proteasome core is composed of 14 alpha and 14 beta subunits that assemble into four stacked heptameric rings, resulting in a barrel-shaped structure. The two inner rings, each composed of seven catalytic beta subunits, are sandwiched by two outer rings, each composed of seven alpha subunits. The catalytic chamber with the active sites is on the inside of the barrel. Has a gated structure, the ends of the cylinder being occluded by the N-termini of the alpha-subunits. Is capped by the proteasome-associated ATPase, ARC.

The protein localises to the cytoplasm. It participates in protein degradation; proteasomal Pup-dependent pathway. With respect to regulation, the formation of the proteasomal ATPase ARC-20S proteasome complex, likely via the docking of the C-termini of ARC into the intersubunit pockets in the alpha-rings, may trigger opening of the gate for substrate entry. Interconversion between the open-gate and close-gate conformations leads to a dynamic regulation of the 20S proteasome proteolysis activity. Functionally, component of the proteasome core, a large protease complex with broad specificity involved in protein degradation. This chain is Proteasome subunit alpha, found in Acidimicrobium ferrooxidans (strain DSM 10331 / JCM 15462 / NBRC 103882 / ICP).